The primary structure comprises 249 residues: AA9 family lytic polysaccharide monooxygenase A (249 aa).

Residues 1 to 21 (MALSKIAALSTILASASLVAG) form the signal peptide. His22 contributes to the Cu(2+) binding site. A Methylhistidine modification is found at His22. Residues Asn34 and Asn80 are each glycosylated (N-linked (GlcNAc...) asparagine). Disulfide bonds link Cys77-Cys199 and Cys118-Cys122. His107 serves as a coordination point for Cu(2+). 2 residues coordinate O2: His185 and Gln194. Tyr196 is a binding site for Cu(2+).

The protein belongs to the polysaccharide monooxygenase AA9 family. Requires Cu(2+) as cofactor. Post-translationally, the catalytically essential N-terminal histidine His-22 is post-translationally modified by methylation to prevent protonation of the histidine side chain, and protect the critical active site of the enzyme from oxidative damage.

Its subcellular location is the secreted. The enzyme catalyses [(1-&gt;4)-beta-D-glucosyl]n+m + reduced acceptor + O2 = 4-dehydro-beta-D-glucosyl-[(1-&gt;4)-beta-D-glucosyl]n-1 + [(1-&gt;4)-beta-D-glucosyl]m + acceptor + H2O.. Lytic polysaccharide monooxygenase (LPMO) that exhibits a mixed C1/C4 oxidative cleavage activity on cellulose and xyloglucan. Catalysis by LPMOs requires the reduction of the active-site copper from Cu(II) to Cu(I) by a reducing agent and H(2)O(2) or O(2) as a cosubstrate. Shows a higher boosting effect with cellulases on the enzymatic saccharification of complex lignocellulosic substrates associated with xyloglucan than on the lignocellulosic substrates without xyloglucan. The oxidative cleavage of xyloglucan by LPMO9A may facilitate to open up the sterical hindrance of cellulose by xyloglucan and thereby increase accessibility for cellulase to lignocellulosic substrates. The polypeptide is AA9 family lytic polysaccharide monooxygenase A (Penicillium parvum (Eupenicillium parvum)).